The chain runs to 341 residues: MTIRIAINGFGRIGRNVLRALYESGRQTQMRVVAINELAAAEGMAHLLQYDTCHGRFAWSVRQQDDWLWIGDDRIRLLHRPQIADLPWEALQVDVVLECSGVYGSRADGEAHLLAGAGKVLFSHPGGHDLDATVVYGVNQESLLAEHRIVSNASCTTNCIIPVIKLLDDAFAIESGAVTTIHSSMNDQQVIDAYHPDLRRTRAASHSIIPVDTKLAAGIARVLPQFRDRFEAISVRVPTLNVTAIDLSVSVRTPVRVEQVNHLLQKAASTAFHGIVDYTELPLVSTDFNHDPHSAIVDGTQTRVSGRHLIKTLVWCDNEWGFANRMLDTTLAMARAVSNAS.

12-13 (RI) lines the NAD(+) pocket. Substrate is bound by residues 154 to 156 (SCT), R200, 213 to 214 (TK), and R236. The active-site Nucleophile is the C155. N318 provides a ligand contact to NAD(+).

The protein belongs to the glyceraldehyde-3-phosphate dehydrogenase family. Epd subfamily. Homotetramer.

Its subcellular location is the cytoplasm. It carries out the reaction D-erythrose 4-phosphate + NAD(+) + H2O = 4-phospho-D-erythronate + NADH + 2 H(+). It participates in cofactor biosynthesis; pyridoxine 5'-phosphate biosynthesis; pyridoxine 5'-phosphate from D-erythrose 4-phosphate: step 1/5. In terms of biological role, catalyzes the NAD-dependent conversion of D-erythrose 4-phosphate to 4-phosphoerythronate. This is D-erythrose-4-phosphate dehydrogenase from Edwardsiella ictaluri (strain 93-146).